The primary structure comprises 370 residues: MASSTTRGPRVSDLFSGLPPAVTTPANQSAEASAGNGSVAGADAPAVTPFQSLQLVHQLKGLIVLLYSVVVVVGLVGNCLLVLVIARVRRLHNVTNFLIGNLALSDVLMCTACVPLTLAYAFEPRGWVFGGGLCHLVFFLQPVTVYVSVFTLTTIAVDRYVVLVHPLRRRISLRLSAYAVLAIWALSAVLALPAAVHTYHVELKPHDVRLCEEFWGSQERQRQLYAWGLLLVTYLLPLLVILLSYVRVSVKLRNRVVPGCVTQSQADWDRARRRRTFCLLVVIVVVFAVCWLPLHVFNLLRDLDPHAIDPYAFGLVQLLCHWLAMSSACYNPFIYAWLHDSFREELRKLLVAWPRKIAPHGQNMTVSVVI.

The Extracellular segment spans residues 1-62 (MASSTTRGPR…LQLVHQLKGL (62 aa)). Residues Asn27 and Asn36 are each glycosylated (N-linked (GlcNAc...) asparagine). A helical membrane pass occupies residues 63–83 (IVLLYSVVVVVGLVGNCLLVL). The Cytoplasmic segment spans residues 84–101 (VIARVRRLHNVTNFLIGN). A helical transmembrane segment spans residues 102–122 (LALSDVLMCTACVPLTLAYAF). The Extracellular portion of the chain corresponds to 123 to 126 (EPRG). Residues 127-147 (WVFGGGLCHLVFFLQPVTVYV) form a helical membrane-spanning segment. A disulfide bond links Cys134 and Cys211. At 148–175 (SVFTLTTIAVDRYVVLVHPLRRRISLRL) the chain is on the cytoplasmic side. Residues 176–196 (SAYAVLAIWALSAVLALPAAV) form a helical membrane-spanning segment. The Extracellular portion of the chain corresponds to 197–225 (HTYHVELKPHDVRLCEEFWGSQERQRQLY). A helical transmembrane segment spans residues 226-246 (AWGLLLVTYLLPLLVILLSYV). Over 247 to 276 (RVSVKLRNRVVPGCVTQSQADWDRARRRRT) the chain is Cytoplasmic. The helical transmembrane segment at 277–297 (FCLLVVIVVVFAVCWLPLHVF) threads the bilayer. Topologically, residues 298–317 (NLLRDLDPHAIDPYAFGLVQ) are extracellular. A helical transmembrane segment spans residues 318 to 338 (LLCHWLAMSSACYNPFIYAWL). The Cytoplasmic portion of the chain corresponds to 339-369 (HDSFREELRKLLVAWPRKIAPHGQNMTVSVV). Positions 365-370 (TVSVVI) are required for interaction with GRIP1, GRIP2 and PICK1.

This sequence belongs to the G-protein coupled receptor 1 family. As to quaternary structure, interacts through its C-terminal region with the PDZ domain-containing proteins GRIP1, GRIP2 and PICK1. Interacts with PDZ domains 4 and 5 of GRIP1 and with the PDZ domain of PICK1. In terms of tissue distribution, only detected in the pituitary gland and in all cell types of pituitary adenomas.

It localises to the cell membrane. Its function is as follows. Receptor for prolactin-releasing peptide (PrRP). Implicated in lactation, regulation of food intake and pain-signal processing. This is Prolactin-releasing peptide receptor (PRLHR) from Homo sapiens (Human).